Reading from the N-terminus, the 118-residue chain is MARIAGVNIPDNKHAVISLTYIFGVGRHTAKSILAAVGIGPTTKIRELDDAQLDAIRAEVAKVPTEGDLRREISMNIKRLMDLGCYRGLRHRRSLPVRGQRTKTNARTRKGPRKPIKK.

Positions Arg92–Lys118 are disordered.

The protein belongs to the universal ribosomal protein uS13 family. As to quaternary structure, part of the 30S ribosomal subunit. Forms a loose heterodimer with protein S19. Forms two bridges to the 50S subunit in the 70S ribosome.

Functionally, located at the top of the head of the 30S subunit, it contacts several helices of the 16S rRNA. In the 70S ribosome it contacts the 23S rRNA (bridge B1a) and protein L5 of the 50S subunit (bridge B1b), connecting the 2 subunits; these bridges are implicated in subunit movement. Contacts the tRNAs in the A and P-sites. The polypeptide is Small ribosomal subunit protein uS13 (Acinetobacter baylyi (strain ATCC 33305 / BD413 / ADP1)).